The chain runs to 95 residues: MNLKPLGDRIVIKILEAEEKTESGIVLPEKAKEKPQEGEVVAVGSGKTLDDGSKVEPEVKAGDKVVYSKFAGNEVEVDGEEYLIMRQDDILAVIE.

Positions 36–55 (QEGEVVAVGSGKTLDDGSKV) are disordered.

The protein belongs to the GroES chaperonin family. Heptamer of 7 subunits arranged in a ring. Interacts with the chaperonin GroEL.

The protein resides in the cytoplasm. Its function is as follows. Together with the chaperonin GroEL, plays an essential role in assisting protein folding. The GroEL-GroES system forms a nano-cage that allows encapsulation of the non-native substrate proteins and provides a physical environment optimized to promote and accelerate protein folding. GroES binds to the apical surface of the GroEL ring, thereby capping the opening of the GroEL channel. This Natranaerobius thermophilus (strain ATCC BAA-1301 / DSM 18059 / JW/NM-WN-LF) protein is Co-chaperonin GroES.